We begin with the raw amino-acid sequence, 394 residues long: L-lactate dehydrogenase (394 aa).

Positions 1–380 (MIISAASDYR…SRDSLVQNAE (380 aa)) constitute an FMN hydroxy acid dehydrogenase domain. Residue Tyr24 participates in substrate binding. Residues Ser106 and Gln127 each contribute to the FMN site. Tyr129 serves as a coordination point for substrate. Thr155 is a binding site for FMN. Residue Arg164 participates in substrate binding. Lys251 is an FMN binding site. The active-site Proton acceptor is the His275. Arg278 provides a ligand contact to substrate. 306–330 (DSGIRNGLDVVRMIALGADSVLLGR) lines the FMN pocket.

It belongs to the FMN-dependent alpha-hydroxy acid dehydrogenase family. Requires FMN as cofactor.

Its subcellular location is the cell inner membrane. It catalyses the reaction (S)-lactate + A = pyruvate + AH2. Functionally, catalyzes the conversion of L-lactate to pyruvate. Is coupled to the respiratory chain. The protein is L-lactate dehydrogenase of Klebsiella pneumoniae (strain 342).